We begin with the raw amino-acid sequence, 513 residues long: Microtubule-associated protein 70-5 (513 aa).

Disordered regions lie at residues 1-20 (MTAA…SQLK), 60-81 (KLGA…LEEE), 347-367 (FLTS…GSVT), and 393-413 (ANGL…EDGN). Polar residues predominate over residues 9–18 (VSDTSSLQSQ). The stretch at 10–322 (SDTSSLQSQL…LKLRLKTIED (313 aa)) forms a coiled coil. The span at 60 to 80 (KLGATENQVDQKELERKKLEE) shows a compositional bias: basic and acidic residues. The required for targeting to microtubules stretch occupies residues 190–400 (FLEKINRQKV…ITANGLTDQH (211 aa)). Positions 426–501 (DRLQKEVIAL…EESKLCRKAK (76 aa)) form a coiled coil.

Belongs to the MAP70 family. Interacts with MAP70.1 and itself.

It localises to the cytoplasm. Its subcellular location is the cytoskeleton. In terms of biological role, plant-specific protein that interact with microtubules and regulates microtubule dynamics. May play a role in anisotropic cell expansion and organ growth. In association with MAP70.1, is essential for the normal banding pattern of secondary cell wall and for the proper development of xylem tracheary elements and wood formation. This chain is Microtubule-associated protein 70-5 (MAP70.5), found in Arabidopsis thaliana (Mouse-ear cress).